The sequence spans 384 residues: S-adenosylmethionine synthase (384 aa).

His15 is an ATP binding site. Position 17 (Asp17) interacts with Mg(2+). Position 43 (Glu43) interacts with K(+). 2 residues coordinate L-methionine: Glu56 and Gln99. The segment at 99-109 (QSPDINQGVDR) is flexible loop. ATP contacts are provided by residues 164–166 (DAK), 230–231 (RF), Asp239, 245–246 (RK), Ala262, and Lys266. Asp239 is an L-methionine binding site. Lys270 provides a ligand contact to L-methionine.

It belongs to the AdoMet synthase family. In terms of assembly, homotetramer; dimer of dimers. The cofactor is Mg(2+). K(+) is required as a cofactor.

It localises to the cytoplasm. It carries out the reaction L-methionine + ATP + H2O = S-adenosyl-L-methionine + phosphate + diphosphate. Its pathway is amino-acid biosynthesis; S-adenosyl-L-methionine biosynthesis; S-adenosyl-L-methionine from L-methionine: step 1/1. Its function is as follows. Catalyzes the formation of S-adenosylmethionine (AdoMet) from methionine and ATP. The overall synthetic reaction is composed of two sequential steps, AdoMet formation and the subsequent tripolyphosphate hydrolysis which occurs prior to release of AdoMet from the enzyme. In Erwinia tasmaniensis (strain DSM 17950 / CFBP 7177 / CIP 109463 / NCPPB 4357 / Et1/99), this protein is S-adenosylmethionine synthase.